A 383-amino-acid polypeptide reads, in one-letter code: Xylose/arabinose import ATP-binding protein XacK (383 aa).

Positions 4–240 (LTLDDVTKVY…PNNLFVAGFI (237 aa)) constitute an ABC transporter domain. 41-48 (GPSGCGKS) is a binding site for ATP.

Belongs to the ABC transporter superfamily. Carbohydrate uptake transporter-1 (CUT1) (TC 3.A.1.1) family. In terms of assembly, the complex is composed of two ATP-binding proteins (XacJ and XacK), two transmembrane proteins (XacH and XacI) and a solute-binding protein (XacG).

The protein localises to the cell membrane. It catalyses the reaction D-xylose(out) + ATP + H2O = D-xylose(in) + ADP + phosphate + H(+). The enzyme catalyses L-arabinose(out) + ATP + H2O = L-arabinose(in) + ADP + phosphate + H(+). Its function is as follows. Part of the ABC transporter complex XacGHIJK involved in the uptake of xylose and arabinose. Responsible for energy coupling to the transport system. This is Xylose/arabinose import ATP-binding protein XacK from Haloferax volcanii (strain ATCC 29605 / DSM 3757 / JCM 8879 / NBRC 14742 / NCIMB 2012 / VKM B-1768 / DS2) (Halobacterium volcanii).